We begin with the raw amino-acid sequence, 514 residues long: 2-isopropylmalate synthase (514 aa).

One can recognise a Pyruvate carboxyltransferase domain in the interval 5–267; it reads IYIFDTTLRD…HTDIVTEEIT (263 aa). The Mn(2+) site is built by aspartate 14, histidine 202, histidine 204, and asparagine 238. The segment at 392-514 is regulatory domain; it reads KLKYYQVFTG…SKDLQKISAN (123 aa).

This sequence belongs to the alpha-IPM synthase/homocitrate synthase family. LeuA type 1 subfamily. As to quaternary structure, homodimer. Mn(2+) serves as cofactor.

The protein resides in the cytoplasm. The catalysed reaction is 3-methyl-2-oxobutanoate + acetyl-CoA + H2O = (2S)-2-isopropylmalate + CoA + H(+). The protein operates within amino-acid biosynthesis; L-leucine biosynthesis; L-leucine from 3-methyl-2-oxobutanoate: step 1/4. Functionally, catalyzes the condensation of the acetyl group of acetyl-CoA with 3-methyl-2-oxobutanoate (2-ketoisovalerate) to form 3-carboxy-3-hydroxy-4-methylpentanoate (2-isopropylmalate). This Clostridium kluyveri (strain NBRC 12016) protein is 2-isopropylmalate synthase.